The primary structure comprises 198 residues: Ribonuclease HII (198 aa).

Residues 1 to 198 enclose the RNase H type-2 domain; the sequence is MLCGIDEAGR…QRRSFFVKNL (198 aa). A divalent metal cation-binding residues include Asp6, Glu7, and Asp112.

Belongs to the RNase HII family. It depends on Mn(2+) as a cofactor. Mg(2+) is required as a cofactor.

Its subcellular location is the cytoplasm. It carries out the reaction Endonucleolytic cleavage to 5'-phosphomonoester.. Its function is as follows. Endonuclease that specifically degrades the RNA of RNA-DNA hybrids. The polypeptide is Ribonuclease HII (Treponema denticola (strain ATCC 35405 / DSM 14222 / CIP 103919 / JCM 8153 / KCTC 15104)).